The sequence spans 519 residues: MRKNPMDVIKKKHWWQSDALKWSVLGLLGLLVGYLVVLMYAQGEYLFAITTLILSSAGLYIFANRKAYAWRYVYPGMAGMGLFVLFPLVCTIAIAFTNYSSTNQLTFERAQEVLLDRSWQAGKIYNFGLYPAGDEWQLALSDGETGKNYLSDAFKFGGEQKLQLKESATQPEGERANLRVITQNRQALSDITAILPDGNKVMMSSLRQFSGTQPLYTLDGDGTLTNNQSGVKYRPNNQIGFYQSITADGNWGDEKLSPGYTVTTGWKNFTRVFTDEGIQKPFLAIFVWTVVFSLITVFLTVAVGMVLACLVQWEALRGKAVYRVLLILPYAVPSFISILIFKGLFNQSFGEINMMLSALFGVKPAWFSDPTTARTMLIIVNTWLGYPYMMILCMGLLKAIPDDLYEASAMDGAGPFQNFFKITLPLLIKPLTPLMIASFAFNFNNFVLIQLLTNGGPDRLGTTTPAGYTDLLVNYTYRIAFEGGGGQDFGLAAAIATLIFLLVGALAIVNLKATRMKFD.

At 1–18 (MRKNPMDVIKKKHWWQSD) the chain is on the cytoplasmic side. A helical transmembrane segment spans residues 19–41 (ALKWSVLGLLGLLVGYLVVLMYA). Residues 42 to 44 (QGE) are Periplasmic-facing. A helical transmembrane segment spans residues 45–62 (YLFAITTLILSSAGLYIF). Residues 63 to 74 (ANRKAYAWRYVY) are Cytoplasmic-facing. A helical membrane pass occupies residues 75–97 (PGMAGMGLFVLFPLVCTIAIAFT). At 98–288 (NYSSTNQLTF…QKPFLAIFVW (191 aa)) the chain is on the periplasmic side. The 225-residue stretch at 286-510 (FVWTVVFSLI…LLVGALAIVN (225 aa)) folds into the ABC transmembrane type-1 domain. Residues 289 to 311 (TVVFSLITVFLTVAVGMVLACLV) traverse the membrane as a helical segment. Over 312 to 323 (QWEALRGKAVYR) the chain is Cytoplasmic. The chain crosses the membrane as a helical span at residues 324–346 (VLLILPYAVPSFISILIFKGLFN). Residues 347–374 (QSFGEINMMLSALFGVKPAWFSDPTTAR) lie on the Periplasmic side of the membrane. The helical transmembrane segment at 375 to 397 (TMLIIVNTWLGYPYMMILCMGLL) threads the bilayer. Residues 398–417 (KAIPDDLYEASAMDGAGPFQ) lie on the Cytoplasmic side of the membrane. The helical transmembrane segment at 418–440 (NFFKITLPLLIKPLTPLMIASFA) threads the bilayer. Residues 441 to 488 (FNFNNFVLIQLLTNGGPDRLGTTTPAGYTDLLVNYTYRIAFEGGGGQD) lie on the Periplasmic side of the membrane. A helical membrane pass occupies residues 489–511 (FGLAAAIATLIFLLVGALAIVNL). The Cytoplasmic portion of the chain corresponds to 512-519 (KATRMKFD).

It belongs to the binding-protein-dependent transport system permease family. MalFG subfamily. In terms of assembly, the complex is composed of two ATP-binding proteins (MalK), two transmembrane proteins (MalG and MalF) and a solute-binding protein (MalE).

It localises to the cell inner membrane. Its function is as follows. Part of the ABC transporter complex MalEFGK involved in maltose/maltodextrin import. Probably responsible for the translocation of the substrate across the membrane. The sequence is that of Maltose/maltodextrin transport system permease protein MalF (malF) from Escherichia coli O6:H1 (strain CFT073 / ATCC 700928 / UPEC).